We begin with the raw amino-acid sequence, 101 residues long: Protein S100-A3 (101 aa).

Residue A2 is modified to N-acetylalanine. EF-hand domains lie at 12 to 47 and 50 to 85; these read IVCT…TWTP and FREC…LCLY. 2 residues coordinate Ca(2+): K28 and E33. C30 and C68 are disulfide-bonded. R51 carries the post-translational modification Citrulline; by PAD3. Ca(2+)-binding residues include D63, N65, D67, E69, and E74. An intrachain disulfide couples C81 to C99. The Zn(2+) site is built by C83, C86, H87, and C93.

This sequence belongs to the S-100 family. Homodimer and homotetramer for the citrullinated form. Post-translationally, more than half of the arginine residues undergo citrullination by PAD1 and PAD2. Arg-51 is specifically citrullinated by PAD3 and promotes tetramerization. In terms of tissue distribution, skin specific, specifically expressed at the inner endocuticle of hair fibers.

The protein localises to the cytoplasm. Binds both calcium and zinc. May be involved in calcium-dependent cuticle cell differentiation, hair shaft and hair cuticular barrier formation. The chain is Protein S100-A3 (S100A3) from Homo sapiens (Human).